A 200-amino-acid chain; its full sequence is MTKVRTKISLKIGANSRIPAQIASFNGLTSDKEHIAIIFGKADECSSSPIVRIHSECLTGDVFHSSRCDCGEQLDEAIELMEKEGGIIIYLRQEGRGIGLYNKIDAYKLQSEGMDTYQANNQLGFEDDLRDFTEAGQMLAALNIRKLQLLTNNPLKVKALREYGITVDKVISTSTFIKDDNESYLRTKAKNAGHAIRFPF.

52–56 (RIHSE) is a binding site for GTP. Zn(2+) is bound by residues Cys-57, Cys-68, and Cys-70. Residues Gln-73, 94–96 (EGR), and Thr-116 each bind GTP. The active-site Proton acceptor is Asp-128. Residue Arg-130 is the Nucleophile of the active site. GTP contacts are provided by Thr-151 and Lys-156.

This sequence belongs to the GTP cyclohydrolase II family. Requires Zn(2+) as cofactor.

The enzyme catalyses GTP + 4 H2O = 2,5-diamino-6-hydroxy-4-(5-phosphoribosylamino)-pyrimidine + formate + 2 phosphate + 3 H(+). It participates in cofactor biosynthesis; riboflavin biosynthesis; 5-amino-6-(D-ribitylamino)uracil from GTP: step 1/4. Catalyzes the conversion of GTP to 2,5-diamino-6-ribosylamino-4(3H)-pyrimidinone 5'-phosphate (DARP), formate and pyrophosphate. This chain is GTP cyclohydrolase-2, found in Psychromonas ingrahamii (strain DSM 17664 / CCUG 51855 / 37).